Consider the following 668-residue polypeptide: CLK4-associating serine/arginine rich protein (668 aa).

Ser-101 carries the phosphoserine modification. Disordered regions lie at residues Ala-173–Asp-232 and Ala-252–His-668. A compositionally biased stretch (acidic residues) spans Pro-182–Asn-214. Positions Arg-265–Lys-283 are enriched in basic residues. 2 positions are modified to phosphoserine: Ser-285 and Ser-294. Over residues Ala-290–Ser-313 the composition is skewed to basic and acidic residues. Thr-327 bears the Phosphothreonine mark. Phosphoserine occurs at positions 331 and 335. Low complexity-rich tracts occupy residues Ala-340–Pro-353 and Ser-378–Ser-395. Over residues Ser-396–Arg-435 the composition is skewed to basic residues. A compositionally biased stretch (basic and acidic residues) spans His-436–Arg-446. The span at Arg-475 to Ser-486 shows a compositional bias: basic residues. Low complexity-rich tracts occupy residues His-487–Gln-510 and Gln-518–Ser-527. Ser-541 is subject to Phosphoserine. Thr-567 is modified (phosphothreonine). The stretch at Ala-579–Ser-641 forms a coiled coil. Basic and acidic residues-rich tracts occupy residues Phe-584–Ala-611 and Lys-619–Tyr-635. A compositionally biased stretch (low complexity) spans Ser-636–Arg-645. Residues Ser-653–His-668 are compositionally biased toward basic residues.

This sequence belongs to the splicing factor SR family. In terms of assembly, probably interacts with CLK4. Phosphorylated in vitro by CLK4. In terms of tissue distribution, highly expressed in brain. Expressed at intermediate level in lung and liver. In brain, it is expressed in the hippocampus, cerebellum and olfactory bulb.

Its subcellular location is the nucleus. It is found in the nucleoplasm. Probably functions as an alternative splicing regulator. May regulate the mRNA splicing of genes such as CLK1. May act by regulating members of the CLK kinase family. This is CLK4-associating serine/arginine rich protein (Clasrp) from Mus musculus (Mouse).